The primary structure comprises 679 residues: Methionine--tRNA ligase (679 aa).

Residues 14-24 (PYANGSIHLGH) carry the 'HIGH' region motif. Zn(2+) contacts are provided by C145, C148, C158, and C161. Residues 331–335 (KMSKS) carry the 'KMSKS' region motif. K334 provides a ligand contact to ATP. The region spanning 577–679 (TFAAVDLRVA…SGAKPGQRIK (103 aa)) is the tRNA-binding domain.

Belongs to the class-I aminoacyl-tRNA synthetase family. MetG type 1 subfamily. Homodimer. Requires Zn(2+) as cofactor.

It is found in the cytoplasm. The enzyme catalyses tRNA(Met) + L-methionine + ATP = L-methionyl-tRNA(Met) + AMP + diphosphate. Functionally, is required not only for elongation of protein synthesis but also for the initiation of all mRNA translation through initiator tRNA(fMet) aminoacylation. This Pseudomonas putida (strain ATCC 47054 / DSM 6125 / CFBP 8728 / NCIMB 11950 / KT2440) protein is Methionine--tRNA ligase.